Here is a 368-residue protein sequence, read N- to C-terminus: Phosphoribosylformylglycinamidine cyclo-ligase (368 aa).

Belongs to the AIR synthase family.

The protein resides in the cytoplasm. It catalyses the reaction 2-formamido-N(1)-(5-O-phospho-beta-D-ribosyl)acetamidine + ATP = 5-amino-1-(5-phospho-beta-D-ribosyl)imidazole + ADP + phosphate + H(+). It participates in purine metabolism; IMP biosynthesis via de novo pathway; 5-amino-1-(5-phospho-D-ribosyl)imidazole from N(2)-formyl-N(1)-(5-phospho-D-ribosyl)glycinamide: step 2/2. The protein is Phosphoribosylformylglycinamidine cyclo-ligase of Chelativorans sp. (strain BNC1).